The primary structure comprises 221 residues: MTLNDKYPFTDEDQAIINSYKAVVDGVSALIGEHCEIVLHSLENIEHSAICIANGHNTNRQVGSPITDLALRSLRNMQSESVSKPYFTRAKGSVLMKSVTIAIRNKTQRIIGLLCININLDVPVSQFLQCFMLTEHTNETSSVNFANSVEDLVAQTIEKTIEEVNADRAVANNTKNRQIVLSLYEKGIFDIKDAINLVAERLDISRHTVYLYIRQIKQEQE.

To E.coli YheO.

This is an uncharacterized protein from Haemophilus influenzae (strain ATCC 51907 / DSM 11121 / KW20 / Rd).